Reading from the N-terminus, the 95-residue chain is Protein GOLVEN 9 (95 aa).

The first 24 residues, 1-24 (MKKTSLKLMTLVLGFCFVIYLLQG), serve as a signal peptide directing secretion. Residues 25-73 (PRGGSRNGDLLIARKLISLEPIETKNAARSLKDSISTDLEEEVDRLMEH) constitute a propeptide that is removed on maturation. A disordered region spans residues 72 to 95 (EHEYPSPVKPRKRTPVHNGVRNRH). Position 75 is a sulfotyrosine (Tyr-75). Positions 80–95 (KPRKRTPVHNGVRNRH) are enriched in basic residues. The residue at position 86 (Pro-86) is a Hydroxyproline. The propeptide occupies 90-95 (GVRNRH).

This sequence belongs to the RGF family. Binds to LRR receptor-like serine/threonine-protein kinases to trigger their dimerization with SERK proteins and subsequent signaling. As to expression, expressed in roots.

It is found in the secreted. In terms of biological role, signaling peptide (root growth factor) required during root gravitropism in a PIN2-traffic dependent manner. Regulates the pattern of root growth and lateral root development by modulating the length and the number of cortical cells in the root apical meristem (RAM), and the anticlinal asymmetric cell divisions in lateral root initiation cells. In Arabidopsis thaliana (Mouse-ear cress), this protein is Protein GOLVEN 9.